The sequence spans 808 residues: Sucrose synthase 4 (808 aa).

A GT-B glycosyltransferase region spans residues Met-277 to Thr-754.

This sequence belongs to the glycosyltransferase 1 family. Plant sucrose synthase subfamily. Detected in the whole plant with highest expression in young rosette leaves and roots.

It carries out the reaction an NDP-alpha-D-glucose + D-fructose = a ribonucleoside 5'-diphosphate + sucrose + H(+). Sucrose-cleaving enzyme that provides UDP-glucose and fructose for various metabolic pathways. This chain is Sucrose synthase 4 (SUS4), found in Arabidopsis thaliana (Mouse-ear cress).